A 382-amino-acid chain; its full sequence is Queuine tRNA-ribosyltransferase (382 aa).

Asp94 functions as the Proton acceptor in the catalytic mechanism. Substrate-binding positions include 94–98 (DSGGF), Asp148, Gln192, and Gly219. Residues 250-256 (GVGKPED) are RNA binding. The Nucleophile role is filled by Asp269. Residues 274 to 278 (TRNAR) form an RNA binding; important for wobble base 34 recognition region. Zn(2+)-binding residues include Cys307, Cys309, Cys312, and His338.

This sequence belongs to the queuine tRNA-ribosyltransferase family. In terms of assembly, homodimer. Within each dimer, one monomer is responsible for RNA recognition and catalysis, while the other monomer binds to the replacement base PreQ1. It depends on Zn(2+) as a cofactor.

The enzyme catalyses 7-aminomethyl-7-carbaguanine + guanosine(34) in tRNA = 7-aminomethyl-7-carbaguanosine(34) in tRNA + guanine. The protein operates within tRNA modification; tRNA-queuosine biosynthesis. Its function is as follows. Catalyzes the base-exchange of a guanine (G) residue with the queuine precursor 7-aminomethyl-7-deazaguanine (PreQ1) at position 34 (anticodon wobble position) in tRNAs with GU(N) anticodons (tRNA-Asp, -Asn, -His and -Tyr). Catalysis occurs through a double-displacement mechanism. The nucleophile active site attacks the C1' of nucleotide 34 to detach the guanine base from the RNA, forming a covalent enzyme-RNA intermediate. The proton acceptor active site deprotonates the incoming PreQ1, allowing a nucleophilic attack on the C1' of the ribose to form the product. After dissociation, two additional enzymatic reactions on the tRNA convert PreQ1 to queuine (Q), resulting in the hypermodified nucleoside queuosine (7-(((4,5-cis-dihydroxy-2-cyclopenten-1-yl)amino)methyl)-7-deazaguanosine). The polypeptide is Queuine tRNA-ribosyltransferase (Haemophilus ducreyi (strain 35000HP / ATCC 700724)).